The sequence spans 299 residues: Tyrosine recombinase XerC (299 aa).

The 85-residue stretch at 3-87 (PQCQSYLQQF…AIKQWGEFLL (85 aa)) folds into the Core-binding (CB) domain. The Tyr recombinase domain occupies 108–287 (PLPKNIDVDS…DFQHLAKVYD (180 aa)). Residues Arg-147, Lys-171, His-239, Arg-242, and His-265 contribute to the active site. Tyr-274 (O-(3'-phospho-DNA)-tyrosine intermediate) is an active-site residue.

It belongs to the 'phage' integrase family. XerC subfamily. Forms a cyclic heterotetrameric complex composed of two molecules of XerC and two molecules of XerD.

The protein resides in the cytoplasm. In terms of biological role, site-specific tyrosine recombinase, which acts by catalyzing the cutting and rejoining of the recombining DNA molecules. The XerC-XerD complex is essential to convert dimers of the bacterial chromosome into monomers to permit their segregation at cell division. It also contributes to the segregational stability of plasmids. This is Tyrosine recombinase XerC from Shewanella sp. (strain ANA-3).